The sequence spans 180 residues: Oligoribonuclease (180 aa).

The region spanning 7-170 (LIWIDLEMTG…DDIRESIAEL (164 aa)) is the Exonuclease domain. Residue tyrosine 128 is part of the active site.

This sequence belongs to the oligoribonuclease family.

It localises to the cytoplasm. Its function is as follows. 3'-to-5' exoribonuclease specific for small oligoribonucleotides. This is Oligoribonuclease from Pseudomonas entomophila (strain L48).